The sequence spans 73 residues: Mucroporin-like peptide (73 aa).

An N-terminal signal peptide occupies residues 1 to 22; it reads MKVKCLLAVFLIVLIAAEHCQA. Residue Lys38 is modified to Lysine amide. A propeptide spanning residues 44–73 is cleaved from the precursor; that stretch reads ELGTQFQPRQKNFMRREVDLERLFAEMPDY.

The protein belongs to the non-disulfide-bridged peptide (NDBP) superfamily. Short antimicrobial peptide (group 4) family. Expressed by the venom gland.

It localises to the secreted. Its subcellular location is the target cell membrane. In terms of biological role, cationic host defense peptide that have antibacterial activity by breaking membranes. Is more effective on Gram-positive than on Gram-negative bacteria. The sequence is that of Mucroporin-like peptide from Lychas mucronatus (Chinese swimming scorpion).